A 103-amino-acid polypeptide reads, in one-letter code: Small ribosomal subunit protein uS10 (103 aa).

The protein belongs to the universal ribosomal protein uS10 family. In terms of assembly, part of the 30S ribosomal subunit.

Involved in the binding of tRNA to the ribosomes. The sequence is that of Small ribosomal subunit protein uS10 from Actinobacillus pleuropneumoniae serotype 5b (strain L20).